Here is a 238-residue protein sequence, read N- to C-terminus: Accessory gene regulator A (238 aa).

One can recognise a Response regulatory domain in the interval lysine 2–glutamate 125. Aspartate 59 is subject to 4-aspartylphosphate. Positions isoleucine 143–isoleucine 238 constitute an HTH LytTR-type domain.

It is found in the cytoplasm. Required for high-level post-exponential phase expression of a series of secreted proteins. The sequence is that of Accessory gene regulator A (agrA) from Staphylococcus aureus (strain COL).